Here is a 498-residue protein sequence, read N- to C-terminus: ATP synthase subunit beta, chloroplastic (498 aa).

172–179 serves as a coordination point for ATP; sequence GGAGVGKT.

This sequence belongs to the ATPase alpha/beta chains family. F-type ATPases have 2 components, CF(1) - the catalytic core - and CF(0) - the membrane proton channel. CF(1) has five subunits: alpha(3), beta(3), gamma(1), delta(1), epsilon(1). CF(0) has four main subunits: a(1), b(1), b'(1) and c(9-12).

The protein localises to the plastid. The protein resides in the chloroplast thylakoid membrane. It carries out the reaction ATP + H2O + 4 H(+)(in) = ADP + phosphate + 5 H(+)(out). Its function is as follows. Produces ATP from ADP in the presence of a proton gradient across the membrane. The catalytic sites are hosted primarily by the beta subunits. This Nypa fruticans (Nypa palm) protein is ATP synthase subunit beta, chloroplastic.